The sequence spans 298 residues: Acetylglutamate kinase (298 aa).

Substrate-binding positions include 64 to 65 (GG), Arg86, and Asn195.

Belongs to the acetylglutamate kinase family. ArgB subfamily.

The protein resides in the cytoplasm. The enzyme catalyses N-acetyl-L-glutamate + ATP = N-acetyl-L-glutamyl 5-phosphate + ADP. It participates in amino-acid biosynthesis; L-arginine biosynthesis; N(2)-acetyl-L-ornithine from L-glutamate: step 2/4. In terms of biological role, catalyzes the ATP-dependent phosphorylation of N-acetyl-L-glutamate. This Aquifex aeolicus (strain VF5) protein is Acetylglutamate kinase.